The chain runs to 185 residues: Homeobox expressed in ES cells 1 (185 aa).

Residues 108–167 constitute a DNA-binding region (homeobox); it reads GRRPRTAFTQNQIEVLENVFRVNCYPGIDIREDLAQKLNLEEDRIQIWFQNRRAKLKRSH.

Belongs to the ANF homeobox family. In terms of assembly, can form heterodimers with PROP1 in binding to DNA. Interacts with TLE1.

It localises to the nucleus. Its function is as follows. Required for the normal development of the forebrain, eyes and other anterior structures such as the olfactory placodes and pituitary gland. Possible transcriptional repressor. Binds to the palindromic PIII sequence, 5'-AGCTTGAGTCTAATTGAATTAACTGTAC-3'. HESX1 and PROP1 bind as heterodimers on this palindromic site, and, in vitro, HESX1 can antagonize PROP1 activation. This Pan paniscus (Pygmy chimpanzee) protein is Homeobox expressed in ES cells 1 (HESX1).